The primary structure comprises 89 residues: Nucleoside triphosphatase I (89 aa).

The Helicase ATP-binding domain maps to 42–89 (FLGLDKMHSLLLFHDTGVGKTITTTFIIKQLKNIYTNWSILLLVKKHL). 55–62 (HDTGVGKT) contacts ATP.

Belongs to the helicase family. NPH I subfamily.

It carries out the reaction a ribonucleoside 5'-triphosphate + H2O = a ribonucleoside 5'-diphosphate + phosphate + H(+). Serves two roles in transcription; it acts in concert with viral termination factor/capping enzyme to catalyze release of UUUUUNU-containing nascent RNA from the elongation complex, and it acts by itself as a polymerase elongation factor to facilitate readthrough of intrinsic pause sites. In Swinepox virus (strain Kasza) (SWPV), this protein is Nucleoside triphosphatase I (NPH1).